The primary structure comprises 239 residues: Probable transcriptional regulatory protein BC_0539 (239 aa).

Belongs to the TACO1 family. YeeN subfamily.

It localises to the cytoplasm. This is Probable transcriptional regulatory protein BC_0539 from Bacillus cereus (strain ATCC 14579 / DSM 31 / CCUG 7414 / JCM 2152 / NBRC 15305 / NCIMB 9373 / NCTC 2599 / NRRL B-3711).